The primary structure comprises 135 residues: Large ribosomal subunit protein uL16c (135 aa).

Belongs to the universal ribosomal protein uL16 family. As to quaternary structure, part of the 50S ribosomal subunit.

It localises to the plastid. Its subcellular location is the chloroplast. This is Large ribosomal subunit protein uL16c from Stigeoclonium helveticum (Green alga).